Consider the following 178-residue polypeptide: Large ribosomal subunit protein uL6 (178 aa).

This sequence belongs to the universal ribosomal protein uL6 family. In terms of assembly, part of the 50S ribosomal subunit.

Functionally, this protein binds to the 23S rRNA, and is important in its secondary structure. It is located near the subunit interface in the base of the L7/L12 stalk, and near the tRNA binding site of the peptidyltransferase center. This Streptococcus pneumoniae serotype 19F (strain G54) protein is Large ribosomal subunit protein uL6.